A 212-amino-acid polypeptide reads, in one-letter code: Ras-related protein Rab-2A (212 aa).

Position 2 is an N-acetylalanine (Ala-2). The segment at 2 to 19 (AYAYLFKYIIIGDTGVGK) is required for interaction with PRKCI. Positions 16, 17, 18, 19, 20, 21, and 38 each coordinate GTP. Ser-20 provides a ligand contact to Mg(2+). The short motif at 37 to 42 (LTIGVE) is the Switch 1 element. Residues Thr-38 and Asp-61 each contribute to the Mg(2+) site. The short motif at 63–72 (AGQESFRSIT) is the Switch 2 element. GTP contacts are provided by Gly-64, Asn-119, Lys-120, Asp-122, Ala-150, and Lys-151. S-geranylgeranyl cysteine attachment occurs at residues Cys-211 and Cys-212.

The protein belongs to the small GTPase superfamily. Rab family. As to quaternary structure, interacts with PRKCI. Interacts with TRIP11. Interacts (in GTP-bound form) with GARIN1B. Interacts (GTP-bound) with HOPS complex component VPS39; interaction contributes to obtaining a functional HOPS complex that promotes autophagosome-lysosome membrane fusion driven by STX17-SNAP29-VAMP8. May interact with VPS41. The cofactor is Mg(2+). Post-translationally, prenylated. Prenylation is required for association with cellular membranes.

The protein resides in the endoplasmic reticulum-Golgi intermediate compartment membrane. The protein localises to the melanosome. It is found in the endoplasmic reticulum membrane. It localises to the golgi apparatus membrane. Its subcellular location is the cytoplasmic vesicle. The protein resides in the secretory vesicle. The protein localises to the acrosome. It is found in the autophagosome membrane. It carries out the reaction GTP + H2O = GDP + phosphate + H(+). Its activity is regulated as follows. Regulated by guanine nucleotide exchange factors (GEFs) which promote the exchange of bound GDP for free GTP, GTPase activating proteins (GAPs) which increase the GTP hydrolysis activity, and GDP dissociation inhibitors (GDIs) which inhibit the dissociation of the nucleotide from the GTPase. Its function is as follows. The small GTPases Rab are key regulators of intracellular membrane trafficking, from the formation of transport vesicles to their fusion with membranes. Rabs cycle between active GTP-bound and inactive GDP-bound states. In their active state, drive transport of vesicular carriers from donor organelles to acceptor organelles to regulate the membrane traffic that maintains organelle identity and morphology. RAB2A regulates autophagy by promoting autophagosome-lysosome fusion via recruitment of the HOPS endosomal tethering complex; this process involves autophagosomal RAB2A and lysosomal RAB39A recruitment of HOPS subcomplexes VPS39-VPS11 and VPS41-VPS16-VPS18-VPS33A, respectively, which assemble into a functional complex to mediate membrane tethering and SNAREs-driven membrane fusion. Required for protein transport from the endoplasmic reticulum to the Golgi complex. Regulates the compacted morphology of the Golgi. Together with RAB2B, redundantly required for efficient autophagic flux. This Canis lupus familiaris (Dog) protein is Ras-related protein Rab-2A (RAB2A).